A 670-amino-acid chain; its full sequence is MDKQTAADRVAALRTELERHNRLYYAEDRPEITDAEYDLLFRELVDLETRFPDLAAPDSPTQRVGGAPLDKFEQVTHRIPMLSLENAFTDVEIADFDDRVKRFLGLHGDVEIDYVCEPKMDGLAVELVYERGILTVGSTRGDGVVGENVTHNLKTVRGIPLRLRCEQPPELLEVRGEVYLPLAAFQRLNAQREEEGEPPFANPRNAAAGSIRQLDSRITARRPLAIFCYAPGEVRGASFAAQTEFLDRIGEWGLPVNPLIRPVKGVAEILAYYREMTERRDSLPYEIDGVVVKVDSFALQRELGEKSRSPRWAVAVKFPPRQAVTVVEDIVPSVGRTGVITPTANLRPVEVSGVTVSRATLHNWEEMERKDIRIGDTVVIERAGDVIPAVVKVLTEKRSGSERPLPIPAVCPECGSEVVKIPDEVAVRCMGLSCPAQIRESIIHFASRDAMDMEGLGEKYIEQLLRLGLVKNVADLYTLTKDQFMQFDRMGDKLAENLLNAIEASKQRELSRFIFALGIRHVGEHTAKLLAGAFGSIENLERATEEELLSIREVGPQVARSIITFFRNEGNRETIRRMFKAGVRPTAEEKKVGGRFTGKTFVFTGALTRFSRPEAQKMVEKEGGHAAGSVSKKTDYVVAGAEAGSKLDKARQLGVRVLTEDEFLAMLEEG.

NAD(+)-binding positions include 34–38 (DAEYD), 83–84 (SL), and E117. The active-site N6-AMP-lysine intermediate is K119. NAD(+) contacts are provided by R140, E177, K293, and K317. The Zn(2+) site is built by C411, C414, C429, and C434. Residues 591–670 (KVGGRFTGKT…DEFLAMLEEG (80 aa)) form the BRCT domain.

It belongs to the NAD-dependent DNA ligase family. LigA subfamily. The cofactor is Mg(2+). Mn(2+) serves as cofactor.

The catalysed reaction is NAD(+) + (deoxyribonucleotide)n-3'-hydroxyl + 5'-phospho-(deoxyribonucleotide)m = (deoxyribonucleotide)n+m + AMP + beta-nicotinamide D-nucleotide.. In terms of biological role, DNA ligase that catalyzes the formation of phosphodiester linkages between 5'-phosphoryl and 3'-hydroxyl groups in double-stranded DNA using NAD as a coenzyme and as the energy source for the reaction. It is essential for DNA replication and repair of damaged DNA. The chain is DNA ligase from Geobacter sulfurreducens (strain ATCC 51573 / DSM 12127 / PCA).